The chain runs to 161 residues: Nucleotide-binding protein PputGB1_4497 (161 aa).

This sequence belongs to the YajQ family.

Its function is as follows. Nucleotide-binding protein. This chain is Nucleotide-binding protein PputGB1_4497, found in Pseudomonas putida (strain GB-1).